Here is a 247-residue protein sequence, read N- to C-terminus: TLC domain-containing protein 1 (247 aa).

Residues 1 to 27 form the signal peptide; the sequence is MPLLFHPAWPLLLGATLTFRALRRVLC. Residues 28–46 lie on the Extracellular side of the membrane; the sequence is RLPQPAHVQTDPLRTWRWH. In terms of domain architecture, TLC spans 40–234; the sequence is LRTWRWHNLL…LLRSDFCPER (195 aa). A helical transmembrane segment spans residues 47–67; sequence NLLVSFTHSIVSGIWALLCLW. The Cytoplasmic segment spans residues 68-83; the sequence is QTPEMLVEIETAWSAS. A helical membrane pass occupies residues 84–104; it reads GYLLVCFSAGYFIHDTVDIVV. The Extracellular portion of the chain corresponds to 105-123; it reads SKQTRASWEYLVHHVMAMG. The segment at residues 124–144 is an intramembrane region (helical); the sequence is AFFSGIFWKRFVGGGVLTLLV. Topologically, residues 145 to 173 are extracellular; the sequence is EVSNIFLTLRMMMKINNAQDLLLYKVNKY. Residues 174 to 194 traverse the membrane as a helical segment; it reads INLVMYFLFRLAPQAYLTKFF. Over 195-201 the chain is Cytoplasmic; it reads LQYAGQR. The helical transmembrane segment at 202-222 threads the bilayer; sequence TLGTFLLAILLMLDLMIIIYF. Residues 223–247 lie on the Extracellular side of the membrane; that stretch reads SRLLRSDFCPERAPRRQQKDKFLTE.

The protein resides in the cell membrane. Its function is as follows. Regulates the composition and fluidity of the plasma membrane. Inhibits the incorporation of membrane-fluidizing phospholipids containing omega-3 long-chain polyunsaturated fatty acids (LCPUFA) and thereby promotes membrane rigidity. Does not appear to have any effect on LCPUFA synthesis. The polypeptide is TLC domain-containing protein 1 (Tlcd1) (Mus musculus (Mouse)).